The chain runs to 522 residues: Transmembrane protein 213R (522 aa).

2 helical membrane-spanning segments follow: residues 33-50 (NTIT…LLFG) and 55-72 (SLYI…IYSQ).

The protein belongs to the IIV-6 213R family.

It localises to the membrane. The polypeptide is Transmembrane protein 213R (Invertebrate iridescent virus 6 (IIV-6)).